The following is a 212-amino-acid chain: Imidazole glycerol phosphate synthase subunit HisH (212 aa).

The Glutamine amidotransferase type-1 domain maps to Ser3 to Pro212. The Nucleophile role is filled by Cys82. Residues His192 and Glu194 contribute to the active site.

Heterodimer of HisH and HisF.

Its subcellular location is the cytoplasm. The catalysed reaction is 5-[(5-phospho-1-deoxy-D-ribulos-1-ylimino)methylamino]-1-(5-phospho-beta-D-ribosyl)imidazole-4-carboxamide + L-glutamine = D-erythro-1-(imidazol-4-yl)glycerol 3-phosphate + 5-amino-1-(5-phospho-beta-D-ribosyl)imidazole-4-carboxamide + L-glutamate + H(+). The enzyme catalyses L-glutamine + H2O = L-glutamate + NH4(+). It functions in the pathway amino-acid biosynthesis; L-histidine biosynthesis; L-histidine from 5-phospho-alpha-D-ribose 1-diphosphate: step 5/9. Its function is as follows. IGPS catalyzes the conversion of PRFAR and glutamine to IGP, AICAR and glutamate. The HisH subunit catalyzes the hydrolysis of glutamine to glutamate and ammonia as part of the synthesis of IGP and AICAR. The resulting ammonia molecule is channeled to the active site of HisF. This chain is Imidazole glycerol phosphate synthase subunit HisH, found in Nitrosomonas europaea (strain ATCC 19718 / CIP 103999 / KCTC 2705 / NBRC 14298).